A 364-amino-acid chain; its full sequence is Phosphoserine aminotransferase (364 aa).

R42 contributes to the L-glutamate binding site. Pyridoxal 5'-phosphate contacts are provided by residues 76 to 77 (GR), W102, T156, D175, and Q198. K199 is modified (N6-(pyridoxal phosphate)lysine). 240 to 241 (NT) contacts pyridoxal 5'-phosphate.

It belongs to the class-V pyridoxal-phosphate-dependent aminotransferase family. SerC subfamily. Homodimer. It depends on pyridoxal 5'-phosphate as a cofactor.

The protein localises to the cytoplasm. It carries out the reaction O-phospho-L-serine + 2-oxoglutarate = 3-phosphooxypyruvate + L-glutamate. The enzyme catalyses 4-(phosphooxy)-L-threonine + 2-oxoglutarate = (R)-3-hydroxy-2-oxo-4-phosphooxybutanoate + L-glutamate. It participates in amino-acid biosynthesis; L-serine biosynthesis; L-serine from 3-phospho-D-glycerate: step 2/3. It functions in the pathway cofactor biosynthesis; pyridoxine 5'-phosphate biosynthesis; pyridoxine 5'-phosphate from D-erythrose 4-phosphate: step 3/5. Functionally, catalyzes the reversible conversion of 3-phosphohydroxypyruvate to phosphoserine and of 3-hydroxy-2-oxo-4-phosphonooxybutanoate to phosphohydroxythreonine. This chain is Phosphoserine aminotransferase, found in Shewanella woodyi (strain ATCC 51908 / MS32).